A 621-amino-acid chain; its full sequence is uncharacterized protein (621 aa).

An N-terminal signal peptide occupies residues 1–15 (MRRSVCYVTPSVARA).

This sequence belongs to the chlamydial CPn_0512/CT_425/TC_0708 family.

This is an uncharacterized protein from Chlamydia trachomatis serovar D (strain ATCC VR-885 / DSM 19411 / UW-3/Cx).